The primary structure comprises 397 residues: DnaJ homolog subfamily A member 4 (397 aa).

One can recognise a J domain in the interval 4–70 (ETQYYDILGV…RDIYDQGGEQ (67 aa)). Position 18 is a phosphoserine (Ser18). The CR-type zinc-finger motif lies at 122–206 (GITKKLALQK…CSGAKVTREK (85 aa)). Zn(2+)-binding residues include Cys135, Cys138, Cys151, Cys154, Cys178, Cys181, Cys194, and Cys197. CXXCXGXG motif repeat units follow at residues 135-142 (CEKCEGIG), 151-158 (CPLCKGRG), 178-185 (CIECKGQG), and 194-201 (CENCSGAK). The span at 366–380 (EFNPNEQSWRQHREA) shows a compositional bias: basic and acidic residues. The tract at residues 366 to 397 (EFNPNEQSWRQHREAYEEDDEEPRAGVQCQTA) is disordered. Cys394 bears the Cysteine methyl ester mark. Cys394 carries the S-farnesyl cysteine lipid modification. Residues 395-397 (QTA) constitute a propeptide, removed in mature form.

Specifically expressed in testis and heart.

The protein resides in the membrane. This chain is DnaJ homolog subfamily A member 4 (Dnaja4), found in Mus musculus (Mouse).